Reading from the N-terminus, the 172-residue chain is 3-hydroxydecanoyl-[acyl-carrier-protein] dehydratase (172 aa).

His71 is an active-site residue.

This sequence belongs to the thioester dehydratase family. FabA subfamily. Homodimer.

It is found in the cytoplasm. It carries out the reaction a (3R)-hydroxyacyl-[ACP] = a (2E)-enoyl-[ACP] + H2O. The catalysed reaction is (3R)-hydroxydecanoyl-[ACP] = (2E)-decenoyl-[ACP] + H2O. It catalyses the reaction (2E)-decenoyl-[ACP] = (3Z)-decenoyl-[ACP]. The protein operates within lipid metabolism; fatty acid biosynthesis. In terms of biological role, necessary for the introduction of cis unsaturation into fatty acids. Catalyzes the dehydration of (3R)-3-hydroxydecanoyl-ACP to E-(2)-decenoyl-ACP and then its isomerization to Z-(3)-decenoyl-ACP. Can catalyze the dehydratase reaction for beta-hydroxyacyl-ACPs with saturated chain lengths up to 16:0, being most active on intermediate chain length. In Vibrio cholerae serotype O1 (strain ATCC 39541 / Classical Ogawa 395 / O395), this protein is 3-hydroxydecanoyl-[acyl-carrier-protein] dehydratase.